A 370-amino-acid polypeptide reads, in one-letter code: Chaperone protein DnaJ (370 aa).

The J domain occupies 4 to 68 (DYYQVLGVSK…QKRAAYDRFG (65 aa)). Residues 133 to 211 (GIEKNISFSS…CHGMGRYHKQ (79 aa)) form a CR-type zinc finger. The Zn(2+) site is built by Cys-146, Cys-149, Cys-163, Cys-166, Cys-185, Cys-188, Cys-199, and Cys-202. CXXCXGXG motif repeat units lie at residues 146–153 (CDACHGTG), 163–170 (CDSCGGVG), 185–192 (CHKCQGNG), and 199–206 (CKKCHGMG).

Belongs to the DnaJ family. In terms of assembly, homodimer. The cofactor is Zn(2+).

Its subcellular location is the cytoplasm. Functionally, participates actively in the response to hyperosmotic and heat shock by preventing the aggregation of stress-denatured proteins and by disaggregating proteins, also in an autonomous, DnaK-independent fashion. Unfolded proteins bind initially to DnaJ; upon interaction with the DnaJ-bound protein, DnaK hydrolyzes its bound ATP, resulting in the formation of a stable complex. GrpE releases ADP from DnaK; ATP binding to DnaK triggers the release of the substrate protein, thus completing the reaction cycle. Several rounds of ATP-dependent interactions between DnaJ, DnaK and GrpE are required for fully efficient folding. Also involved, together with DnaK and GrpE, in the DNA replication of plasmids through activation of initiation proteins. This is Chaperone protein DnaJ from Rickettsia typhi (strain ATCC VR-144 / Wilmington).